Consider the following 307-residue polypeptide: Ribonuclease Z (307 aa).

Positions 63, 65, 67, 68, 141, 212, and 270 each coordinate Zn(2+). Aspartate 67 serves as the catalytic Proton acceptor.

It belongs to the RNase Z family. In terms of assembly, homodimer. Requires Zn(2+) as cofactor.

It catalyses the reaction Endonucleolytic cleavage of RNA, removing extra 3' nucleotides from tRNA precursor, generating 3' termini of tRNAs. A 3'-hydroxy group is left at the tRNA terminus and a 5'-phosphoryl group is left at the trailer molecule.. Zinc phosphodiesterase, which displays some tRNA 3'-processing endonuclease activity. Probably involved in tRNA maturation, by removing a 3'-trailer from precursor tRNA. In Bacillus cereus (strain ATCC 14579 / DSM 31 / CCUG 7414 / JCM 2152 / NBRC 15305 / NCIMB 9373 / NCTC 2599 / NRRL B-3711), this protein is Ribonuclease Z.